Reading from the N-terminus, the 473-residue chain is PTS system trehalose-specific EIIBC component (473 aa).

The region spanning 1-89 is the PTS EIIB type-1 domain; that stretch reads MMSKINQTDI…IASTGQAQVD (89 aa). Over 1–110 the chain is Cytoplasmic; the sequence is MMSKINQTDI…MKWHEQLISH (110 aa). C29 acts as the Phosphocysteine intermediate; for EIIB activity in catalysis. A Phosphocysteine; by EIIA modification is found at C29. One can recognise a PTS EIIC type-1 domain in the interval 109–473; it reads SHFAVIFFPL…KYRLGTLDIV (365 aa). A helical transmembrane segment spans residues 111–131; that stretch reads FAVIFFPLLPALISGGLILGF. The Periplasmic segment spans residues 132–158; the sequence is RNVIGDLPMSNGQTLAQMYPSLQTIYD. The helical transmembrane segment at 159-179 threads the bilayer; it reads FLWLIGEAIFFYLPVGICWSA. Residues 180-187 are Cytoplasmic-facing; sequence VKKMGGTP. The helical transmembrane segment at 188–208 threads the bilayer; it reads ILGIVLGVTLVSPQLMNAYLL. Residues 209-225 are Periplasmic-facing; sequence GQQLPEVWDFGMFSIAK. The chain crosses the membrane as a helical span at residues 226 to 246; it reads VGYQAQVIPALLAGLALGVIE. Topologically, residues 247-258 are cytoplasmic; the sequence is TRLKRIVPDYLY. A helical membrane pass occupies residues 259 to 279; the sequence is LVVVPVCSLILAVFLAHALIG. The Periplasmic portion of the chain corresponds to 280 to 300; that stretch reads PFGRMIGDGVAFAVRHLMTGS. The chain crosses the membrane as a helical span at residues 301 to 321; sequence FAPIGAALFGFLYAPLVITGV. The Cytoplasmic segment spans residues 322–340; sequence HQTTLAIDLQMIQSMGGTP. Residues 341 to 361 traverse the membrane as a helical segment; it reads VWPLIALSNIAQGSAVIGIII. Residues 362-370 are Periplasmic-facing; that stretch reads SSRKHNERE. Residues 371–391 form a helical membrane-spanning segment; that stretch reads ISVPAAISAWLGVTEPAMYGI. Topologically, residues 392–398 are cytoplasmic; sequence NLKYRFP. Residues 399–419 form a helical membrane-spanning segment; the sequence is MLCAMIGSGLAGLLCGLNGVM. At 420 to 440 the chain is on the periplasmic side; sequence ANGIGVGGLPGILSIQPSYWQ. The chain crosses the membrane as a helical span at residues 441–461; the sequence is VFALAMAIAIIIPIVLTSFIY. The Cytoplasmic portion of the chain corresponds to 462 to 473; sequence QRKYRLGTLDIV.

It is found in the cell inner membrane. It carries out the reaction alpha,alpha-trehalose(out) + N(pros)-phospho-L-histidyl-[protein] = alpha,alpha-trehalose 6-phosphate(in) + L-histidyl-[protein]. Functionally, the phosphoenolpyruvate-dependent sugar phosphotransferase system (sugar PTS), a major carbohydrate active transport system, catalyzes the phosphorylation of incoming sugar substrates concomitantly with their translocation across the cell membrane. This system is involved in trehalose transport at low osmolarity. The sequence is that of PTS system trehalose-specific EIIBC component (treB) from Escherichia coli (strain K12).